The following is a 480-amino-acid chain: Glutamyl-tRNA(Gln) amidotransferase subunit A (480 aa).

Active-site charge relay system residues include K74 and S149. Catalysis depends on S173, which acts as the Acyl-ester intermediate.

Belongs to the amidase family. GatA subfamily. Heterotrimer of A, B and C subunits.

It carries out the reaction L-glutamyl-tRNA(Gln) + L-glutamine + ATP + H2O = L-glutaminyl-tRNA(Gln) + L-glutamate + ADP + phosphate + H(+). Its function is as follows. Allows the formation of correctly charged Gln-tRNA(Gln) through the transamidation of misacylated Glu-tRNA(Gln) in organisms which lack glutaminyl-tRNA synthetase. The reaction takes place in the presence of glutamine and ATP through an activated gamma-phospho-Glu-tRNA(Gln). The sequence is that of Glutamyl-tRNA(Gln) amidotransferase subunit A from Vesicomyosocius okutanii subsp. Calyptogena okutanii (strain HA).